Here is a 128-residue protein sequence, read N- to C-terminus: Disintegrin EO4A (128 aa).

A signal peptide spans 1–20; it reads MIPVLLVTICLAVFPFQGSS. A propeptide spanning residues 21–47 is cleaved from the precursor; it reads IILESGNINDYEIVYPKKVNVLPTGAM. The Disintegrin domain occupies 26 to 112; the sequence is GNINDYEIVY…DCPRNPYKGK (87 aa). 4 disulfide bridges follow: cysteine 53-cysteine 76, cysteine 67-cysteine 73, cysteine 72-cysteine 97, and cysteine 85-cysteine 104. Positions 89 to 91 match the Cell attachment site motif; that stretch reads RGD. A propeptide spanning residues 115-128 is cleaved from the precursor; the sequence is PMKWPAAAKGSVLM.

Belongs to the disintegrin family. Dimeric disintegrin subfamily. As to quaternary structure, heterodimer with EO5B; disulfide-linked. Expressed by the venom gland.

It localises to the secreted. In terms of biological role, poor inhibitor of platelet aggregation. The disintegrin inhibits the adhesion of cells expressing the RGD-dependent integrin alpha-5/beta-1 (ITGA5/ITGB1) to immobilized fibronectin. Inhibition on alpha-2b/beta-3 (ITGA2B/ITGB3) is low. This Echis ocellatus (Ocellated saw-scaled viper) protein is Disintegrin EO4A.